Reading from the N-terminus, the 495-residue chain is Internal alternative NAD(P)H-ubiquinone oxidoreductase A1, mitochondrial (495 aa).

The transit peptide at 1-41 (MPWFKNLIKISKTITNQSSSYKSITPLASPLLTQFLQFTKQ) directs the protein to the mitochondrion. Residue 61-91 (RIVVLGSGWAGCRLMKDIDTNIYDVVCVSPR) coordinates FAD. An NAD(+)-binding site is contributed by 228-264 (LHCVVVGGGPTGVEFSGELSDFILKDVHQRYAHVKDY). A Microbody targeting signal motif is present at residues 486–495 (LVFGRDISRI).

It belongs to the NADH dehydrogenase family. FAD serves as cofactor.

It is found in the mitochondrion inner membrane. The protein resides in the peroxisome. The enzyme catalyses a quinone + NADH + H(+) = a quinol + NAD(+). The catalysed reaction is a ubiquinone + NADH + H(+) = a ubiquinol + NAD(+). Alternative NADH-ubiquinone oxidoreductase which catalyzes the oxidation of mitochondrial NADH does not translocate protons across the inner mitochondrial membrane. This is Internal alternative NAD(P)H-ubiquinone oxidoreductase A1, mitochondrial (NDA1) from Solanum tuberosum (Potato).